Consider the following 137-residue polypeptide: NADH-quinone oxidoreductase subunit A (137 aa).

3 consecutive transmembrane segments (helical) span residues 12–32, 66–86, and 95–115; these read WGFA…LGLS, FYLV…LFAW, and WTGF…LVYL.

The protein belongs to the complex I subunit 3 family. NDH-1 is composed of 13 different subunits. Subunits NuoA, H, J, K, L, M, N constitute the membrane sector of the complex.

It is found in the cell inner membrane. It catalyses the reaction a quinone + NADH + 5 H(+)(in) = a quinol + NAD(+) + 4 H(+)(out). Its function is as follows. NDH-1 shuttles electrons from NADH, via FMN and iron-sulfur (Fe-S) centers, to quinones in the respiratory chain. The immediate electron acceptor for the enzyme in this species is believed to be ubiquinone. Couples the redox reaction to proton translocation (for every two electrons transferred, four hydrogen ions are translocated across the cytoplasmic membrane), and thus conserves the redox energy in a proton gradient. The polypeptide is NADH-quinone oxidoreductase subunit A (Pseudomonas putida (strain ATCC 700007 / DSM 6899 / JCM 31910 / BCRC 17059 / LMG 24140 / F1)).